A 449-amino-acid chain; its full sequence is Cyclin-B1-5 (449 aa).

2 disordered regions span residues 1–37 (MATR…AGRP) and 98–147 (PARK…GGSA). Composition is skewed to low complexity over residues 8 to 37 (AAAA…AGRP) and 136 to 147 (SEGAGSSSGGSA).

It belongs to the cyclin family. Cyclin AB subfamily.

The polypeptide is Cyclin-B1-5 (CYCB1-5) (Oryza sativa subsp. japonica (Rice)).